A 66-amino-acid chain; its full sequence is ATP synthase F(0) complex subunit 8 (66 aa).

A helical transmembrane segment spans residues 8–24; the sequence is IWLLAVVIVLTTLMIFL. N6-acetyllysine; alternate is present on lysine 54. At lysine 54 the chain carries N6-succinyllysine; alternate. Lysine 57 is subject to N6-acetyllysine.

Belongs to the ATPase protein 8 family. In terms of assembly, component of the ATP synthase complex composed at least of ATP5F1A/subunit alpha, ATP5F1B/subunit beta, ATP5MC1/subunit c (homooctomer), MT-ATP6/subunit a, MT-ATP8/subunit 8, ATP5ME/subunit e, ATP5MF/subunit f, ATP5MG/subunit g, ATP5MK/subunit k, ATP5MJ/subunit j, ATP5F1C/subunit gamma, ATP5F1D/subunit delta, ATP5F1E/subunit epsilon, ATP5PF/subunit F6, ATP5PB/subunit b, ATP5PD/subunit d, ATP5PO/subunit OSCP. ATP synthase complex consists of a soluble F(1) head domain (subunits alpha(3) and beta(3)) - the catalytic core - and a membrane F(0) domain - the membrane proton channel (subunits c, a, 8, e, f, g, k and j). These two domains are linked by a central stalk (subunits gamma, delta, and epsilon) rotating inside the F1 region and a stationary peripheral stalk (subunits F6, b, d, and OSCP). Interacts with PRICKLE3.

Its subcellular location is the mitochondrion membrane. Subunit 8, of the mitochondrial membrane ATP synthase complex (F(1)F(0) ATP synthase or Complex V) that produces ATP from ADP in the presence of a proton gradient across the membrane which is generated by electron transport complexes of the respiratory chain. ATP synthase complex consist of a soluble F(1) head domain - the catalytic core - and a membrane F(1) domain - the membrane proton channel. These two domains are linked by a central stalk rotating inside the F(1) region and a stationary peripheral stalk. During catalysis, ATP synthesis in the catalytic domain of F(1) is coupled via a rotary mechanism of the central stalk subunits to proton translocation. In vivo, can only synthesize ATP although its ATP hydrolase activity can be activated artificially in vitro. Part of the complex F(0) domain. The polypeptide is ATP synthase F(0) complex subunit 8 (Mammuthus primigenius (Siberian woolly mammoth)).